Here is a 289-residue protein sequence, read N- to C-terminus: DegV domain-containing protein YteA (289 aa).

Residues 3 to 284 (FQIMTDSTAD…DGTIAIFSIS (282 aa)) enclose the DegV domain. Hexadecanoate-binding residues include Thr-62 and Ser-94.

Its function is as follows. May bind long-chain fatty acids, such as palmitate, and may play a role in lipid transport or fatty acid metabolism. The polypeptide is DegV domain-containing protein YteA (yteA) (Lactococcus lactis subsp. lactis (strain IL1403) (Streptococcus lactis)).